The following is an 80-amino-acid chain: Inner kinetochore subunit MHF2 (80 aa).

The protein belongs to the CENP-X/MHF2 family. The MHF histone-fold complex is a heterotetramer of 2 MHF1-MHF2 heterodimers. Together with MPH1/FANCM, forms the FANCM-MHF complex. Component of the inner kinetochore constitutive centromere-associated network (CCAN) (also known as central kinetochore CTF19 complex in yeast), which is composed of at least AME1, CHL4, CNN1, CTF3, CTF19, IML3, MCM16, MCM21, MCM22, MHF1, MHF2, MIF2, NKP1, NKP2, OKP1 and WIP1.

Its function is as follows. DNA-binding component of a FANCM-MHF complex involved in DNA damage repair and genome maintenance. FANCM-MHF promotes gene conversion at blocked replication forks, probably by reversal of the stalled fork. Component of the kinetochore, a multiprotein complex that assembles on centromeric DNA and attaches chromosomes to spindle microtubules, mediating chromosome segregation and sister chromatid segregation during meiosis and mitosis. Component of the inner kinetochore constitutive centromere-associated network (CCAN), which serves as a structural platform for outer kinetochore assembly. The protein is Inner kinetochore subunit MHF2 of Saccharomyces cerevisiae (strain ATCC 204508 / S288c) (Baker's yeast).